We begin with the raw amino-acid sequence, 220 residues long: Ribosomal RNA large subunit methyltransferase E (220 aa).

Gly-60, Trp-62, Asp-92, Asp-108, and Asp-133 together coordinate S-adenosyl-L-methionine. The Proton acceptor role is filled by Lys-173. The tract at residues 195-220 (APRKPKASRDKSSETFILGRHLKRPR) is disordered.

It belongs to the class I-like SAM-binding methyltransferase superfamily. RNA methyltransferase RlmE family.

The protein resides in the cytoplasm. It catalyses the reaction uridine(2552) in 23S rRNA + S-adenosyl-L-methionine = 2'-O-methyluridine(2552) in 23S rRNA + S-adenosyl-L-homocysteine + H(+). Its function is as follows. Specifically methylates the uridine in position 2552 of 23S rRNA at the 2'-O position of the ribose in the fully assembled 50S ribosomal subunit. In Burkholderia lata (strain ATCC 17760 / DSM 23089 / LMG 22485 / NCIMB 9086 / R18194 / 383), this protein is Ribosomal RNA large subunit methyltransferase E.